The chain runs to 121 residues: Large ribosomal subunit protein uL22 (121 aa).

This sequence belongs to the universal ribosomal protein uL22 family. Part of the 50S ribosomal subunit.

This protein binds specifically to 23S rRNA; its binding is stimulated by other ribosomal proteins, e.g. L4, L17, and L20. It is important during the early stages of 50S assembly. It makes multiple contacts with different domains of the 23S rRNA in the assembled 50S subunit and ribosome. In terms of biological role, the globular domain of the protein is located near the polypeptide exit tunnel on the outside of the subunit, while an extended beta-hairpin is found that lines the wall of the exit tunnel in the center of the 70S ribosome. This Arthrobacter sp. (strain FB24) protein is Large ribosomal subunit protein uL22.